A 307-amino-acid polypeptide reads, in one-letter code: Myeloid-associated differentiation marker-like protein 2 (307 aa).

MARVEL domains follow at residues 17-154 (AVTS…ARPG) and 159-303 (YMAT…RIRF). Helical transmembrane passes span 53–73 (FCMA…ACEF), 90–110 (AFAM…PLYF), 129–149 (LAAS…VALT), 163–183 (VSGL…GALV), 198–218 (VAVY…SVMG), 229–249 (RLVV…AVIW), and 278–298 (LVVA…LAYS).

This sequence belongs to the MAL family.

It is found in the membrane. The polypeptide is Myeloid-associated differentiation marker-like protein 2 (MYADML2) (Homo sapiens (Human)).